Consider the following 105-residue polypeptide: Large ribosomal subunit protein uL24 (105 aa).

It belongs to the universal ribosomal protein uL24 family. As to quaternary structure, part of the 50S ribosomal subunit.

Functionally, one of two assembly initiator proteins, it binds directly to the 5'-end of the 23S rRNA, where it nucleates assembly of the 50S subunit. In terms of biological role, one of the proteins that surrounds the polypeptide exit tunnel on the outside of the subunit. The chain is Large ribosomal subunit protein uL24 from Francisella tularensis subsp. tularensis (strain FSC 198).